Here is a 555-residue protein sequence, read N- to C-terminus: 3-oxocholest-4-en-26-oate--CoA ligase (555 aa).

ATP contacts are provided by residues 172 to 180 (TGGTTGHPK), Asp-418, Arg-433, and Lys-524. The tract at residues 525–555 (PDYRWAKDQTGLRPADEVYNNGDGNGAAATG) is disordered. Residues 544–555 (NNGDGNGAAATG) are compositionally biased toward low complexity.

The protein belongs to the ATP-dependent AMP-binding enzyme family.

The catalysed reaction is (25S)-3-oxocholest-4-en-26-oate + ATP + CoA = (25S)-3-oxocholest-4-en-26-oyl-CoA + AMP + diphosphate. It functions in the pathway steroid metabolism; cholesterol metabolism. In terms of biological role, involved in the degradation of the side chains of C-24 branched-chain sterols. Catalyzes the ATP-dependent CoA thioesterification of the sterol 3-oxocholest-4-en-26-oate to yield 3-oxocholest-4-en-26-oyl-CoA. It can also use beta-sitosterol, campesterol and 3beta-hydroxy-5-cholesten-26-oate. The sequence is that of 3-oxocholest-4-en-26-oate--CoA ligase from Rhodococcus rhodochrous.